The sequence spans 211 residues: Pyridoxine/pyridoxamine 5'-phosphate oxidase (211 aa).

Substrate-binding positions include 7-10 (RREY) and lysine 65. FMN-binding positions include 60–65 (RIVLLK), 75–76 (YT), arginine 81, lysine 82, and glutamine 104. Residues tyrosine 122, arginine 126, and serine 130 each coordinate substrate. Residues 139–140 (QS) and tryptophan 184 contribute to the FMN site. A substrate-binding site is contributed by 190 to 192 (RLH). Arginine 194 is an FMN binding site.

Belongs to the pyridoxamine 5'-phosphate oxidase family. In terms of assembly, homodimer. Requires FMN as cofactor.

It carries out the reaction pyridoxamine 5'-phosphate + O2 + H2O = pyridoxal 5'-phosphate + H2O2 + NH4(+). The enzyme catalyses pyridoxine 5'-phosphate + O2 = pyridoxal 5'-phosphate + H2O2. It participates in cofactor metabolism; pyridoxal 5'-phosphate salvage; pyridoxal 5'-phosphate from pyridoxamine 5'-phosphate: step 1/1. It functions in the pathway cofactor metabolism; pyridoxal 5'-phosphate salvage; pyridoxal 5'-phosphate from pyridoxine 5'-phosphate: step 1/1. Catalyzes the oxidation of either pyridoxine 5'-phosphate (PNP) or pyridoxamine 5'-phosphate (PMP) into pyridoxal 5'-phosphate (PLP). The sequence is that of Pyridoxine/pyridoxamine 5'-phosphate oxidase from Vibrio cholerae serotype O1 (strain ATCC 39315 / El Tor Inaba N16961).